The chain runs to 162 residues: Phosphopantetheine adenylyltransferase (162 aa).

Ser9 provides a ligand contact to substrate. Residues 9-10 and His17 contribute to the ATP site; that span reads SF. 3 residues coordinate substrate: Lys41, Val77, and Lys91. Residues 92-94, Glu102, and 126-132 each bind ATP; these read GLR and YAFLSSS.

This sequence belongs to the bacterial CoaD family. In terms of assembly, homohexamer. It depends on Mg(2+) as a cofactor.

The protein resides in the cytoplasm. It carries out the reaction (R)-4'-phosphopantetheine + ATP + H(+) = 3'-dephospho-CoA + diphosphate. It participates in cofactor biosynthesis; coenzyme A biosynthesis; CoA from (R)-pantothenate: step 4/5. Its function is as follows. Reversibly transfers an adenylyl group from ATP to 4'-phosphopantetheine, yielding dephospho-CoA (dPCoA) and pyrophosphate. In Frankia alni (strain DSM 45986 / CECT 9034 / ACN14a), this protein is Phosphopantetheine adenylyltransferase.